Here is a 198-residue protein sequence, read N- to C-terminus: FMN-dependent NADH:quinone oxidoreductase (198 aa).

FMN-binding positions include serine 10 and 16–18 (SIS).

Belongs to the azoreductase type 1 family. As to quaternary structure, homodimer. Requires FMN as cofactor.

The catalysed reaction is 2 a quinone + NADH + H(+) = 2 a 1,4-benzosemiquinone + NAD(+). The enzyme catalyses N,N-dimethyl-1,4-phenylenediamine + anthranilate + 2 NAD(+) = 2-(4-dimethylaminophenyl)diazenylbenzoate + 2 NADH + 2 H(+). Its function is as follows. Quinone reductase that provides resistance to thiol-specific stress caused by electrophilic quinones. In terms of biological role, also exhibits azoreductase activity. Catalyzes the reductive cleavage of the azo bond in aromatic azo compounds to the corresponding amines. The protein is FMN-dependent NADH:quinone oxidoreductase of Mycoplasmopsis pulmonis (strain UAB CTIP) (Mycoplasma pulmonis).